The following is a 279-amino-acid chain: 3-methyl-2-oxobutanoate hydroxymethyltransferase (279 aa).

Positions 49 and 88 each coordinate Mg(2+). Residues 49 to 50, Asp-88, and Lys-118 contribute to the 3-methyl-2-oxobutanoate site; that span reads DS. Residue Glu-120 coordinates Mg(2+). Catalysis depends on Glu-187, which acts as the Proton acceptor.

This sequence belongs to the PanB family. As to quaternary structure, homodecamer; pentamer of dimers. It depends on Mg(2+) as a cofactor.

The protein resides in the cytoplasm. It carries out the reaction 3-methyl-2-oxobutanoate + (6R)-5,10-methylene-5,6,7,8-tetrahydrofolate + H2O = 2-dehydropantoate + (6S)-5,6,7,8-tetrahydrofolate. It participates in cofactor biosynthesis; (R)-pantothenate biosynthesis; (R)-pantoate from 3-methyl-2-oxobutanoate: step 1/2. Catalyzes the reversible reaction in which hydroxymethyl group from 5,10-methylenetetrahydrofolate is transferred onto alpha-ketoisovalerate to form ketopantoate. The chain is 3-methyl-2-oxobutanoate hydroxymethyltransferase from Agrobacterium fabrum (strain C58 / ATCC 33970) (Agrobacterium tumefaciens (strain C58)).